The primary structure comprises 396 residues: S-adenosylmethionine synthase (396 aa).

His16 provides a ligand contact to ATP. Asp18 provides a ligand contact to Mg(2+). Glu44 is a K(+) binding site. The L-methionine site is built by Glu57 and Gln100. The flexible loop stretch occupies residues 100–110 (QSVDIAQGVDR). Residues 165-167 (DAK), Asp240, 246-247 (RK), Ala263, and Lys267 each bind ATP. Asp240 is a binding site for L-methionine. Lys271 provides a ligand contact to L-methionine.

Belongs to the AdoMet synthase family. As to quaternary structure, homotetramer; dimer of dimers. Requires Mg(2+) as cofactor. It depends on K(+) as a cofactor.

Its subcellular location is the cytoplasm. The enzyme catalyses L-methionine + ATP + H2O = S-adenosyl-L-methionine + phosphate + diphosphate. It participates in amino-acid biosynthesis; S-adenosyl-L-methionine biosynthesis; S-adenosyl-L-methionine from L-methionine: step 1/1. In terms of biological role, catalyzes the formation of S-adenosylmethionine (AdoMet) from methionine and ATP. The overall synthetic reaction is composed of two sequential steps, AdoMet formation and the subsequent tripolyphosphate hydrolysis which occurs prior to release of AdoMet from the enzyme. This is S-adenosylmethionine synthase from Pseudomonas syringae pv. syringae (strain B728a).